The following is a 134-amino-acid chain: Phosphoribosyl-AMP cyclohydrolase (134 aa).

Residue aspartate 80 participates in Mg(2+) binding. Position 81 (cysteine 81) interacts with Zn(2+). Residues aspartate 82 and aspartate 84 each contribute to the Mg(2+) site. The Zn(2+) site is built by cysteine 98 and cysteine 105.

The protein belongs to the PRA-CH family. In terms of assembly, homodimer. Mg(2+) is required as a cofactor. Requires Zn(2+) as cofactor.

It is found in the cytoplasm. The catalysed reaction is 1-(5-phospho-beta-D-ribosyl)-5'-AMP + H2O = 1-(5-phospho-beta-D-ribosyl)-5-[(5-phospho-beta-D-ribosylamino)methylideneamino]imidazole-4-carboxamide. Its pathway is amino-acid biosynthesis; L-histidine biosynthesis; L-histidine from 5-phospho-alpha-D-ribose 1-diphosphate: step 3/9. In terms of biological role, catalyzes the hydrolysis of the adenine ring of phosphoribosyl-AMP. The sequence is that of Phosphoribosyl-AMP cyclohydrolase from Janthinobacterium sp. (strain Marseille) (Minibacterium massiliensis).